The following is a 685-amino-acid chain: Methionine--tRNA ligase (685 aa).

The 'HIGH' region motif lies at 12–22 (PYANGSIHLGH). Zn(2+) is bound by residues Cys-143, Cys-146, Cys-156, and Cys-159. The 'KMSKS' region motif lies at 339–343 (KMSKS). Lys-342 contributes to the ATP binding site. One can recognise a tRNA-binding domain in the interval 582–685 (DFMKIDMRVA…AGAQPGDKVG (104 aa)).

Belongs to the class-I aminoacyl-tRNA synthetase family. MetG type 1 subfamily. As to quaternary structure, homodimer. Requires Zn(2+) as cofactor.

Its subcellular location is the cytoplasm. It catalyses the reaction tRNA(Met) + L-methionine + ATP = L-methionyl-tRNA(Met) + AMP + diphosphate. Functionally, is required not only for elongation of protein synthesis but also for the initiation of all mRNA translation through initiator tRNA(fMet) aminoacylation. The polypeptide is Methionine--tRNA ligase (Neisseria meningitidis serogroup A / serotype 4A (strain DSM 15465 / Z2491)).